The primary structure comprises 397 residues: tRNA pseudouridine synthase D (397 aa).

The active-site Nucleophile is Asp-76. In terms of domain architecture, TRUD spans 151 to 361 (GVPNFFGEQR…MEGERRPLRV (211 aa)).

This sequence belongs to the pseudouridine synthase TruD family.

It catalyses the reaction uridine(13) in tRNA = pseudouridine(13) in tRNA. Its function is as follows. Responsible for synthesis of pseudouridine from uracil-13 in transfer RNAs. The chain is tRNA pseudouridine synthase D from Geotalea daltonii (strain DSM 22248 / JCM 15807 / FRC-32) (Geobacter daltonii).